A 143-amino-acid chain; its full sequence is Transcriptional regulator MraZ (143 aa).

SpoVT-AbrB domains are found at residues 5–47 (EFQH…TLTE) and 76–119 (AVEV…DRKL).

The protein belongs to the MraZ family. In terms of assembly, forms oligomers.

It is found in the cytoplasm. The protein localises to the nucleoid. The chain is Transcriptional regulator MraZ from Macrococcus caseolyticus (strain JCSC5402) (Macrococcoides caseolyticum).